The following is a 356-amino-acid chain: Histidinol-phosphate aminotransferase (356 aa).

Position 214 is an N6-(pyridoxal phosphate)lysine (Lys214).

Belongs to the class-II pyridoxal-phosphate-dependent aminotransferase family. Histidinol-phosphate aminotransferase subfamily. Homodimer. Pyridoxal 5'-phosphate is required as a cofactor.

The catalysed reaction is L-histidinol phosphate + 2-oxoglutarate = 3-(imidazol-4-yl)-2-oxopropyl phosphate + L-glutamate. Its pathway is amino-acid biosynthesis; L-histidine biosynthesis; L-histidine from 5-phospho-alpha-D-ribose 1-diphosphate: step 7/9. In Escherichia coli O157:H7, this protein is Histidinol-phosphate aminotransferase (hisC).